A 275-amino-acid chain; its full sequence is 3-methyl-2-oxobutanoate hydroxymethyltransferase (275 aa).

Mg(2+) contacts are provided by Asp-44 and Asp-83. 3-methyl-2-oxobutanoate contacts are provided by residues 44–45, Asp-83, and Lys-113; that span reads DS. Glu-115 is a binding site for Mg(2+). Glu-182 acts as the Proton acceptor in catalysis.

This sequence belongs to the PanB family. In terms of assembly, homodecamer; pentamer of dimers. The cofactor is Mg(2+).

It is found in the cytoplasm. It carries out the reaction 3-methyl-2-oxobutanoate + (6R)-5,10-methylene-5,6,7,8-tetrahydrofolate + H2O = 2-dehydropantoate + (6S)-5,6,7,8-tetrahydrofolate. The protein operates within cofactor biosynthesis; (R)-pantothenate biosynthesis; (R)-pantoate from 3-methyl-2-oxobutanoate: step 1/2. Its function is as follows. Catalyzes the reversible reaction in which hydroxymethyl group from 5,10-methylenetetrahydrofolate is transferred onto alpha-ketoisovalerate to form ketopantoate. This chain is 3-methyl-2-oxobutanoate hydroxymethyltransferase, found in Clostridium botulinum (strain 657 / Type Ba4).